The primary structure comprises 354 residues: Histidinol-phosphate aminotransferase (354 aa).

Residue K222 is modified to N6-(pyridoxal phosphate)lysine.

Belongs to the class-II pyridoxal-phosphate-dependent aminotransferase family. Histidinol-phosphate aminotransferase subfamily. As to quaternary structure, homodimer. Pyridoxal 5'-phosphate serves as cofactor.

The enzyme catalyses L-histidinol phosphate + 2-oxoglutarate = 3-(imidazol-4-yl)-2-oxopropyl phosphate + L-glutamate. It participates in amino-acid biosynthesis; L-histidine biosynthesis; L-histidine from 5-phospho-alpha-D-ribose 1-diphosphate: step 7/9. In Leuconostoc citreum (strain KM20), this protein is Histidinol-phosphate aminotransferase.